The sequence spans 401 residues: Heparan-sulfate 6-O-sulfotransferase 1 (401 aa).

Topologically, residues 1–4 are cytoplasmic; it reads MVER. Residues 5–27 traverse the membrane as a helical; Signal-anchor for type II membrane protein segment; sequence ASKFVLVVAGSACFMLILYQYAG. Over 28–401 the chain is Lumenal; the sequence is PGLSLGAPGG…DYMSHIIEKW (374 aa). A 3'-phosphoadenylyl sulfate-binding site is contributed by 83-91; it reads HIQKTGGTT. Substrate contacts are provided by residues 113-114, R130, W135, and H140; that span reads KK. H140 acts as the Proton acceptor in catalysis. 3'-phosphoadenylyl sulfate contacts are provided by R175 and S183. Substrate contacts are provided by H187 and W194. N254 carries an N-linked (GlcNAc...) asparagine glycan. Position 307–309 (307–309) interacts with 3'-phosphoadenylyl sulfate; that stretch reads MQY. The N-linked (GlcNAc...) asparagine glycan is linked to N310. 313-314 serves as a coordination point for 3'-phosphoadenylyl sulfate; sequence RA. A disordered region spans residues 367–389; it reads ERLLHRSKEALPREDTEEPGRVP.

It belongs to the sulfotransferase 6 family. In terms of processing, N-glycosylated.

The protein localises to the membrane. It carries out the reaction alpha-D-glucosaminyl-[heparan sulfate](n) + 3'-phosphoadenylyl sulfate = 6-sulfo-alpha-D-glucosaminyl-[heparan sulfate](n) + adenosine 3',5'-bisphosphate + H(+). Inhibited by dithiothreitol and stimulated by protamine. 6-O-sulfation enzyme which catalyzes the transfer of sulfate from 3'-phosphoadenosine 5'-phosphosulfate (PAPS) to position 6 of the N-sulfoglucosamine residue (GlcNS) of heparan sulfate. Also transfers sulfate to CDSNS-heparin and performs the crucial step modification in the biosynthesis of anticoagulant heparan sulfate (HSact). Critical for normal neuronal development where it may play a role in neuron branching. May also play a role in limb development. May prefer iduronic acid. In Cricetulus griseus (Chinese hamster), this protein is Heparan-sulfate 6-O-sulfotransferase 1.